Here is a 100-residue protein sequence, read N- to C-terminus: NADH-quinone oxidoreductase subunit K (100 aa).

A run of 3 helical transmembrane segments spans residues M1–G21, I28–A48, and F64–F84.

This sequence belongs to the complex I subunit 4L family. As to quaternary structure, NDH-1 is composed of 14 different subunits. Subunits NuoA, H, J, K, L, M, N constitute the membrane sector of the complex.

The protein localises to the cell inner membrane. The enzyme catalyses a quinone + NADH + 5 H(+)(in) = a quinol + NAD(+) + 4 H(+)(out). Functionally, NDH-1 shuttles electrons from NADH, via FMN and iron-sulfur (Fe-S) centers, to quinones in the respiratory chain. The immediate electron acceptor for the enzyme in this species is believed to be ubiquinone. Couples the redox reaction to proton translocation (for every two electrons transferred, four hydrogen ions are translocated across the cytoplasmic membrane), and thus conserves the redox energy in a proton gradient. The polypeptide is NADH-quinone oxidoreductase subunit K (Helicobacter pylori (strain ATCC 700392 / 26695) (Campylobacter pylori)).